The sequence spans 691 residues: Two-component response regulator ORR21 (691 aa).

The 116-residue stretch at 17–132 (KVLVVDDDPT…ELKNIWQHVI (116 aa)) folds into the Response regulatory domain. The residue at position 68 (aspartate 68) is a 4-aspartylphosphate. The span at 139–155 (NKEHEHSGSLDDTDRTR) shows a compositional bias: basic and acidic residues. 2 disordered regions span residues 139 to 204 (NKEH…KKPR) and 616 to 647 (SHPGSSSSSFQSSNVALGKLPDQGRGKNHGFV). Residues 199–258 (TSKKPRVVWSVELHQQFVNAVNHLGIDKAVPKKILELMNVPGLTRENVASHLQKFRLYLK) constitute a DNA-binding region (myb-like GARP). Low complexity predominate over residues 616-628 (SHPGSSSSSFQSS).

It belongs to the ARR family. Type-B subfamily. Two-component system major event consists of a His-to-Asp phosphorelay between a sensor histidine kinase (HK) and a response regulator (RR). In plants, the His-to-Asp phosphorelay involves an additional intermediate named Histidine-containing phosphotransfer protein (HPt). This multistep phosphorelay consists of a His-Asp-His-Asp sequential transfer of a phosphate group between first a His and an Asp of the HK protein, followed by the transfer to a conserved His of the HPt protein and finally the transfer to an Asp in the receiver domain of the RR protein.

It localises to the nucleus. Transcriptional activator that binds specific DNA sequence. Functions as a response regulator involved in His-to-Asp phosphorelay signal transduction system. Phosphorylation of the Asp residue in the receiver domain activates the ability of the protein to promote the transcription of target genes. May directly activate some type-A response regulators in response to cytokinins. The polypeptide is Two-component response regulator ORR21 (Oryza sativa subsp. indica (Rice)).